The following is a 220-amino-acid chain: UPF0319 protein YccT (220 aa).

The N-terminal stretch at 1–20 (MKTGIVTTLIALCLPVSVFA) is a signal peptide.

This sequence belongs to the UPF0319 family.

The protein is UPF0319 protein YccT of Escherichia coli O139:H28 (strain E24377A / ETEC).